We begin with the raw amino-acid sequence, 867 residues long: Leucine--tRNA ligase (867 aa).

Positions 42-52 (PYPSGKLHMGH) match the 'HIGH' region motif. A 'KMSKS' region motif is present at residues 631-635 (KMSKS). Lys634 is a binding site for ATP.

Belongs to the class-I aminoacyl-tRNA synthetase family.

The protein resides in the cytoplasm. The enzyme catalyses tRNA(Leu) + L-leucine + ATP = L-leucyl-tRNA(Leu) + AMP + diphosphate. This Dichelobacter nodosus (strain VCS1703A) protein is Leucine--tRNA ligase.